A 249-amino-acid chain; its full sequence is Tryptophan synthase alpha chain (249 aa).

Residues glutamate 43 and aspartate 54 each act as proton acceptor in the active site.

The protein belongs to the TrpA family. Tetramer of two alpha and two beta chains.

It carries out the reaction (1S,2R)-1-C-(indol-3-yl)glycerol 3-phosphate + L-serine = D-glyceraldehyde 3-phosphate + L-tryptophan + H2O. It participates in amino-acid biosynthesis; L-tryptophan biosynthesis; L-tryptophan from chorismate: step 5/5. Its function is as follows. The alpha subunit is responsible for the aldol cleavage of indoleglycerol phosphate to indole and glyceraldehyde 3-phosphate. This chain is Tryptophan synthase alpha chain, found in Campylobacter jejuni subsp. doylei (strain ATCC BAA-1458 / RM4099 / 269.97).